We begin with the raw amino-acid sequence, 247 residues long: Molybdate/tungstate transport system permease protein WtpB (247 aa).

The Cytoplasmic segment spans residues 1-8; it reads MRRDYTLY. Residues 9–29 form a helical membrane-spanning segment; it reads LFAALGTFLIAYIAVPIAVIF. Topologically, residues 30–55 are extracellular; the sequence is LKQASDVEMLVKTLHDPYVIEAIRNS. An ABC transmembrane type-1 domain is found at 52 to 238; the sequence is IRNSLLTATA…SLSLGIFVIL (187 aa). Residues 56 to 76 form a helical membrane-spanning segment; that stretch reads LLTATATALIALLFGVPLGYV. Residues 77–90 lie on the Cytoplasmic side of the membrane; that stretch reads LARKDFPGKSAVQA. Residues 91–111 form a helical membrane-spanning segment; it reads LVDVPIVIPHSVVGIMLLVTF. The Extracellular segment spans residues 112 to 114; it reads SNS. The helical transmembrane segment at 115 to 135 threads the bilayer; sequence ILDSYKGIVAAMLFVSAPFTI. Residues 136-163 lie on the Cytoplasmic side of the membrane; the sequence is NAARDGFLAVDEKLEAVARTLGASRWRA. Residues 164–184 traverse the membrane as a helical segment; the sequence is FLSISLPMAFPSIASGAIMTW. Topologically, residues 185 to 222 are extracellular; it reads ARAISEVGAILIVAYYPKTAQVLILEYFNNYGLRASRP. Residues 223–243 traverse the membrane as a helical segment; sequence IAVIMVSLSLGIFVILRWLVG. The Cytoplasmic segment spans residues 244-247; that stretch reads RKNA.

This sequence belongs to the binding-protein-dependent transport system permease family. The complex is composed of two ATP-binding proteins (WtpC), two transmembrane proteins (WtpB) and a solute-binding protein (WtpA).

The protein resides in the cell membrane. In terms of biological role, part of the ABC transporter complex WtpABC involved in molybdate/tungstate import. Probably responsible for the translocation of the substrate across the membrane. The protein is Molybdate/tungstate transport system permease protein WtpB (wtpB) of Thermococcus kodakarensis (strain ATCC BAA-918 / JCM 12380 / KOD1) (Pyrococcus kodakaraensis (strain KOD1)).